Reading from the N-terminus, the 396-residue chain is Alpha-galactosidase 2 (396 aa).

A signal peptide spans 1–25 (MVLLSFSLRFIAFTLTITLTQIADG). 2 disulfide bridges follow: C52–C84 and C132–C163. Residue N55 is glycosylated (N-linked (GlcNAc...) asparagine). Substrate is bound by residues 82-83 (DD) and K159. Catalysis depends on D161, which acts as the Nucleophile. Residues 194-198 (EWGQE), R212, and D216 contribute to the substrate site. D216 serves as the catalytic Proton donor. N-linked (GlcNAc...) asparagine glycosylation is found at N343 and N354.

This sequence belongs to the glycosyl hydrolase 27 family. In terms of assembly, homodimer.

The protein resides in the secreted. Its subcellular location is the cell wall. It is found in the extracellular space. The protein localises to the apoplast. It catalyses the reaction Hydrolysis of terminal, non-reducing alpha-D-galactose residues in alpha-D-galactosides, including galactose oligosaccharides, galactomannans and galactolipids.. In terms of biological role, may regulate leaf (and possibly other organ) development by functioning in cell wall loosening and cell wall expansion. This is Alpha-galactosidase 2 from Arabidopsis thaliana (Mouse-ear cress).